Consider the following 237-residue polypeptide: Ribosomal RNA small subunit methyltransferase G (237 aa).

S-adenosyl-L-methionine contacts are provided by residues Gly-78, Phe-83, 129 to 130 (AE), and Arg-148.

Belongs to the methyltransferase superfamily. RNA methyltransferase RsmG family.

The protein resides in the cytoplasm. In terms of biological role, specifically methylates the N7 position of a guanine in 16S rRNA. This chain is Ribosomal RNA small subunit methyltransferase G, found in Clostridium kluyveri (strain ATCC 8527 / DSM 555 / NBRC 12016 / NCIMB 10680 / K1).